A 523-amino-acid polypeptide reads, in one-letter code: Galactarate dehydratase (L-threo-forming) (523 aa).

This sequence belongs to the UxaA family. Homodimer. Fe(2+) is required as a cofactor.

The catalysed reaction is galactarate = 5-dehydro-4-deoxy-D-glucarate + H2O. Its pathway is carbohydrate acid metabolism; galactarate degradation; D-glycerate from galactarate: step 1/3. In terms of biological role, catalyzes the dehydration of galactarate to form 5-dehydro-4-deoxy-D-glucarate (5-KDG). In Escherichia coli (strain K12), this protein is Galactarate dehydratase (L-threo-forming).